The following is a 101-amino-acid chain: Small ribosomal subunit protein bS18c (101 aa).

This sequence belongs to the bacterial ribosomal protein bS18 family. As to quaternary structure, part of the 30S ribosomal subunit.

Its subcellular location is the plastid. The protein localises to the chloroplast. The sequence is that of Small ribosomal subunit protein bS18c from Lactuca sativa (Garden lettuce).